Consider the following 706-residue polypeptide: Protein kinase C theta type (706 aa).

A C2 domain is found at 1-107; that stretch reads MSPFLRIGLS…KNNGKTEIWL (107 aa). Position 90 is a phosphotyrosine; by LCK (Tyr-90). Residues 159–209 form a Phorbol-ester/DAG-type 1 zinc finger; the sequence is CHEFTATFFPQPTFCSVCHEFVWGLNKQGYQCRQCNAAIHKKCIDKVIAKC. The residue at position 219 (Thr-219) is a Phosphothreonine; by autocatalysis. The segment at 231-281 adopts a Phorbol-ester/DAG-type 2 zinc-finger fold; it reads PHRFKVYNYKSPTFCEHCGTLLWGLARQGLKCDACGMNVHHRCQTKVANLC. Residue Ser-348 is modified to Phosphoserine. The Protein kinase domain occupies 380–634; sequence FILHKMLGKG…RGDIRQHPLF (255 aa). ATP contacts are provided by residues 386–394 and Lys-409; that span reads LGKGSFGKV. Asp-504 (proton acceptor) is an active-site residue. Thr-538 is subject to Phosphothreonine; by PDPK1. One can recognise an AGC-kinase C-terminal domain in the interval 635–706; the sequence is REINWEELER…MNPGMERLIS (72 aa). A phosphoserine mark is found at Ser-676, Ser-685, and Ser-695.

It belongs to the protein kinase superfamily. AGC Ser/Thr protein kinase family. PKC subfamily. In terms of assembly, part of a lipid raft complex composed at least of BCL10, CARD11, MALT1 and IKBKB. Interacts with GLRX3 (via N-terminus). Interacts with ECT2. Interacts with CCDC88A/GIV; the interaction leads to phosphorylation of CCDC88A and inhibition of its guanine nucleotide exchange factor activity. Interacts with PRKCH upstream open reading frame 2; the interaction leads to inhibition of kinase activity. Interacts with CD28. It depends on Mg(2+) as a cofactor. Post-translationally, autophosphorylation at Thr-219 is required for targeting to the TCR and cellular function of PRKCQ upon antigen receptor ligation. Following TCR stimulation, phosphorylated at Tyr-90 and Ser-685. Expressed in skeletal muscle, T-cells, megakaryoblastic cells and platelets.

Its subcellular location is the cytoplasm. The protein localises to the cell membrane. It carries out the reaction L-seryl-[protein] + ATP = O-phospho-L-seryl-[protein] + ADP + H(+). It catalyses the reaction L-threonyl-[protein] + ATP = O-phospho-L-threonyl-[protein] + ADP + H(+). With respect to regulation, novel PKCs (PRKCD, PRKCE, PRKCH and PRKCQ) are calcium-insensitive, but activated by diacylglycerol (DAG) and phosphatidylserine. Three specific sites; Thr-538 (activation loop of the kinase domain), Ser-676 (turn motif) and Ser-695 (hydrophobic region), need to be phosphorylated for its full activation. Inhibited by PRKCH upstream open reading frame 2. Calcium-independent, phospholipid- and diacylglycerol (DAG)-dependent serine/threonine-protein kinase that mediates non-redundant functions in T-cell receptor (TCR) signaling, including T-cells activation, proliferation, differentiation and survival, by mediating activation of multiple transcription factors such as NF-kappa-B, JUN, NFATC1 and NFATC2. In TCR-CD3/CD28-co-stimulated T-cells, is required for the activation of NF-kappa-B and JUN, which in turn are essential for IL2 production, and participates in the calcium-dependent NFATC1 and NFATC2 transactivation. Mediates the activation of the canonical NF-kappa-B pathway (NFKB1) by direct phosphorylation of CARD11 on several serine residues, inducing CARD11 association with lipid rafts and recruitment of the BCL10-MALT1 complex, which then activates IKK complex, resulting in nuclear translocation and activation of NFKB1. May also play an indirect role in activation of the non-canonical NF-kappa-B (NFKB2) pathway. In the signaling pathway leading to JUN activation, acts by phosphorylating the mediator STK39/SPAK and may not act through MAP kinases signaling. Plays a critical role in TCR/CD28-induced NFATC1 and NFATC2 transactivation by participating in the regulation of reduced inositol 1,4,5-trisphosphate generation and intracellular calcium mobilization. After costimulation of T-cells through CD28 can phosphorylate CBLB and is required for the ubiquitination and subsequent degradation of CBLB, which is a prerequisite for the activation of TCR. During T-cells differentiation, plays an important role in the development of T-helper 2 (Th2) cells following immune and inflammatory responses, and, in the development of inflammatory autoimmune diseases, is necessary for the activation of IL17-producing Th17 cells. May play a minor role in Th1 response. Upon TCR stimulation, mediates T-cell protective survival signal by phosphorylating BAD, thus protecting T-cells from BAD-induced apoptosis, and by up-regulating BCL-X(L)/BCL2L1 levels through NF-kappa-B and JUN pathways. In platelets, regulates signal transduction downstream of the ITGA2B, CD36/GP4, F2R/PAR1 and F2RL3/PAR4 receptors, playing a positive role in 'outside-in' signaling and granule secretion signal transduction. May relay signals from the activated ITGA2B receptor by regulating the uncoupling of WASP and WIPF1, thereby permitting the regulation of actin filament nucleation and branching activity of the Arp2/3 complex. May mediate inhibitory effects of free fatty acids on insulin signaling by phosphorylating IRS1, which in turn blocks IRS1 tyrosine phosphorylation and downstream activation of the PI3K/AKT pathway. Phosphorylates MSN (moesin) in the presence of phosphatidylglycerol or phosphatidylinositol. Phosphorylates PDPK1 at 'Ser-504' and 'Ser-532' and negatively regulates its ability to phosphorylate PKB/AKT1. Phosphorylates CCDC88A/GIV and inhibits its guanine nucleotide exchange factor activity. Phosphorylates and activates LRRK1, which phosphorylates RAB proteins involved in intracellular trafficking. The chain is Protein kinase C theta type (PRKCQ) from Homo sapiens (Human).